Here is a 580-residue protein sequence, read N- to C-terminus: FAD-dependent monooxygenase yanF (580 aa).

The disordered stretch occupies residues 1–21; sequence MSSSAECRPIGWGGWGPDPNT. Residues 150-322 form the FAD-binding PCMH-type domain; sequence CRLNASCIVT…VEYDLTTNTG (173 aa). His187 is modified (pros-8alpha-FAD histidine).

It belongs to the oxygen-dependent FAD-linked oxidoreductase family.

The protein operates within secondary metabolite biosynthesis; terpenoid biosynthesis. In terms of biological role, FAD-dependent monooxygenase; part of the gene cluster that mediates the biosynthesis of yanuthone D, a fungal isoprenoid epoxycyclohexenone that acts as an antibiotic against fungi and bacteria. The first step of the pathway is the synthesis of 6-methylsalicylic acid (6-MSA) by the polyketide synthase yanA. 6-MSA is then converted to m-cresol by the decarboxylase yanB. The cytochrome P450 monooxygenase yanC then catalyzes the oxidation of m-cresol to toluquinol. Epoxidation of toluquinol is then performed by the short chain dehydrogenase yanD, with the help of yanE, and a further prenylated by yanG leads to 7-deacetoxyyanuthone A. The next step is the hydroxylation of C-22 of 7-deacetoxyyanuthone A by the cytochrome P450 monooxygenase yanH to yield 22-deacetylyanuthone A. O-Mevalon transferase yanI then attaches mevalon to the hydroxyl group of 22-deacetylyanuthone A to produce yanuthone E. Finally, the FAD-dependent monooxygenase yanF oxidizes the hydroxyl group at C15 of yanuthone E to form yanuthone D. Furthermore, several branching points in the pathway lead to the production of yanuthones F and G from 7-deacetoxyyanuthone A; yanuthones H and I from 22-deacetylyanuthone A; and yanuthone J from yanuthone E. In Aspergillus niger (strain ATCC 1015 / CBS 113.46 / FGSC A1144 / LSHB Ac4 / NCTC 3858a / NRRL 328 / USDA 3528.7), this protein is FAD-dependent monooxygenase yanF.